The chain runs to 193 residues: ATP synthase subunit b 1 (193 aa).

Residues Pro-13–Gly-32 are disordered. A helical transmembrane segment spans residues Ala-40–Leu-60.

Belongs to the ATPase B chain family. F-type ATPases have 2 components, F(1) - the catalytic core - and F(0) - the membrane proton channel. F(1) has five subunits: alpha(3), beta(3), gamma(1), delta(1), epsilon(1). F(0) has three main subunits: a(1), b(2) and c(10-14). The alpha and beta chains form an alternating ring which encloses part of the gamma chain. F(1) is attached to F(0) by a central stalk formed by the gamma and epsilon chains, while a peripheral stalk is formed by the delta and b chains.

The protein localises to the cell inner membrane. In terms of biological role, f(1)F(0) ATP synthase produces ATP from ADP in the presence of a proton or sodium gradient. F-type ATPases consist of two structural domains, F(1) containing the extramembraneous catalytic core and F(0) containing the membrane proton channel, linked together by a central stalk and a peripheral stalk. During catalysis, ATP synthesis in the catalytic domain of F(1) is coupled via a rotary mechanism of the central stalk subunits to proton translocation. Its function is as follows. Component of the F(0) channel, it forms part of the peripheral stalk, linking F(1) to F(0). The protein is ATP synthase subunit b 1 of Mesorhizobium japonicum (strain LMG 29417 / CECT 9101 / MAFF 303099) (Mesorhizobium loti (strain MAFF 303099)).